A 181-amino-acid chain; its full sequence is Alkyl hydroperoxide reductase AhpD (181 aa).

Catalysis depends on C131, which acts as the Proton donor. C131 and C134 are oxidised to a cystine. Residue C134 is the Cysteine sulfenic acid (-SOH) intermediate of the active site.

It belongs to the AhpD family.

It catalyses the reaction N(6)-[(R)-dihydrolipoyl]-L-lysyl-[lipoyl-carrier protein] + a hydroperoxide = N(6)-[(R)-lipoyl]-L-lysyl-[lipoyl-carrier protein] + an alcohol + H2O. Its function is as follows. Antioxidant protein with alkyl hydroperoxidase activity. Required for the reduction of the AhpC active site cysteine residues and for the regeneration of the AhpC enzyme activity. The chain is Alkyl hydroperoxide reductase AhpD from Rhodopseudomonas palustris (strain BisB18).